The sequence spans 61 residues: Small ribosomal subunit protein uS14 (61 aa).

Positions 24, 27, 40, and 43 each coordinate Zn(2+).

It belongs to the universal ribosomal protein uS14 family. Zinc-binding uS14 subfamily. As to quaternary structure, part of the 30S ribosomal subunit. Contacts proteins S3 and S10. Zn(2+) serves as cofactor.

Binds 16S rRNA, required for the assembly of 30S particles and may also be responsible for determining the conformation of the 16S rRNA at the A site. This chain is Small ribosomal subunit protein uS14, found in Pseudothermotoga lettingae (strain ATCC BAA-301 / DSM 14385 / NBRC 107922 / TMO) (Thermotoga lettingae).